Here is a 275-residue protein sequence, read N- to C-terminus: Voltage-dependent calcium channel gamma-5 subunit (275 aa).

4 consecutive transmembrane segments (helical) span residues alanine 8–valine 28, phenylalanine 103–isoleucine 123, isoleucine 129–leucine 149, and phenylalanine 181–methionine 201.

This sequence belongs to the PMP-22/EMP/MP20 family. CACNG subfamily. The L-type calcium channel is composed of five subunits: alpha-1, alpha-2/delta, beta and gamma. Acts as an auxiliary subunit for AMPA-selective glutamate receptors (AMPARs). Found in a complex with GRIA1, GRIA2, GRIA3, GRIA4, CNIH2, CNIH3, CACNG2, CACNG3, CACNG4, CACNG7 and CACNG8. Interacts with GRIA1, GRIA2, GRIA3 and GRIA4. Brain. Enriched in Bergman glia, as well as a variety of neuronal populations including locus coeruleus, olfactory bulb, lateral septal nucleus, interpeduncular nucleus, and the CA2 and rostral/medial CA1 regions of hippocampus.

It is found in the membrane. Its subcellular location is the postsynaptic density membrane. In terms of biological role, regulates the gating properties of AMPA-selective glutamate receptors (AMPARs). Modulates their gating properties by accelerating their rates of activation, deactivation and desensitization. Displays subunit-specific AMPA receptor regulation. Shows specificity for GRIA1, GRIA4 and the long isoform of GRIA2. Thought to stabilize the calcium channel in an inactivated (closed) state. In Mus musculus (Mouse), this protein is Voltage-dependent calcium channel gamma-5 subunit (Cacng5).